Consider the following 156-residue polypeptide: Small ribosomal subunit protein uS7c (156 aa).

Belongs to the universal ribosomal protein uS7 family. In terms of assembly, part of the 30S ribosomal subunit.

It localises to the plastid. The protein localises to the chloroplast. In terms of biological role, one of the primary rRNA binding proteins, it binds directly to 16S rRNA where it nucleates assembly of the head domain of the 30S subunit. This Bowenia serrulata (Byfield fern) protein is Small ribosomal subunit protein uS7c (rps7).